Here is a 511-residue protein sequence, read N- to C-terminus: Putative polyol transporter 2 (511 aa).

12 helical membrane passes run 25 to 45 (FAFA…YDIG), 63 to 83 (VQLE…SGAA), 94 to 114 (YTIV…GFAT), 117 to 137 (PFIM…MMIA), 156 to 176 (FPEI…YFFA), 186 to 206 (FMLG…LAMP), 284 to 304 (ILIA…DAVV), 324 to 344 (LATV…TCLV), 351 to 371 (ALLL…GTSL), 384 to 404 (WAIG…SLGA), 424 to 444 (GASL…MTFL), and 454 to 474 (GAFL…FTFL).

It belongs to the major facilitator superfamily. Sugar transporter (TC 2.A.1.1) family.

The protein resides in the membrane. In terms of biological role, plasma membrane sugar-proton symporter. This chain is Putative polyol transporter 2 (PLT2), found in Arabidopsis thaliana (Mouse-ear cress).